The primary structure comprises 323 residues: Phospho-N-acetylmuramoyl-pentapeptide-transferase (323 aa).

Transmembrane regions (helical) follow at residues 12–32, 58–78, 84–104, 120–140, 151–171, 177–197, 200–220, 229–250, and 303–323; these read IVMA…IIIP, PTIG…IMVG, AMIA…DDLL, MILL…YIGT, INFG…VTNA, GLDG…GIIS, LGHI…LAFL, VFMG…ALIL, and KIVS…FASL.

It belongs to the glycosyltransferase 4 family. MraY subfamily. Requires Mg(2+) as cofactor.

It is found in the cell membrane. The catalysed reaction is UDP-N-acetyl-alpha-D-muramoyl-L-alanyl-gamma-D-glutamyl-meso-2,6-diaminopimeloyl-D-alanyl-D-alanine + di-trans,octa-cis-undecaprenyl phosphate = di-trans,octa-cis-undecaprenyl diphospho-N-acetyl-alpha-D-muramoyl-L-alanyl-D-glutamyl-meso-2,6-diaminopimeloyl-D-alanyl-D-alanine + UMP. Its pathway is cell wall biogenesis; peptidoglycan biosynthesis. Catalyzes the initial step of the lipid cycle reactions in the biosynthesis of the cell wall peptidoglycan: transfers peptidoglycan precursor phospho-MurNAc-pentapeptide from UDP-MurNAc-pentapeptide onto the lipid carrier undecaprenyl phosphate, yielding undecaprenyl-pyrophosphoryl-MurNAc-pentapeptide, known as lipid I. This chain is Phospho-N-acetylmuramoyl-pentapeptide-transferase, found in Clostridium perfringens (strain ATCC 13124 / DSM 756 / JCM 1290 / NCIMB 6125 / NCTC 8237 / Type A).